The following is a 326-amino-acid chain: Methyltransferase phqN (326 aa).

Belongs to the class I-like SAM-binding methyltransferase superfamily. Erg6/SMT family.

The protein operates within alkaloid biosynthesis. Its function is as follows. Methyltransferase; part of the gene cluster that mediates the biosynthesis of paraherquamide, a fungal indole alkaloid that belongs to a family of natural products containing a characteristic bicyclo[2.2.2]diazaoctane core. The first steps in the biosynthesis of paraherquamide is the production of the beta-methyl-proline precursor from L-isoleucine. They require oxidation of a terminally hydroxylated L-isoleucine to the corresponding aldehyde by enzymes which have still to be identified. Spontaneous cyclization and dehydration would yield the 4-methyl pyrolline-5-carboxylic acid, which is then reduced by the pyrroline-5-carboxylate reductase phqD leading to the beta-methyl-proline precursor. The next step of paraherquamide biosynthesis involves coupling of beta-methyl-proline and L-tryptophan by the bimodular NRPS phqB, to produce a monooxopiperazine intermediate. The reductase (R) domain of phqB utilizes NADPH for hydride transfer to reduce the thioester bond of the T domain-tethered linear dipeptide to a hemithioaminal intermediate, which spontaneously cleaves the C-S bond to release the aldehyde product. This compound undergoes spontaneous cyclization and dehydration to give a dienamine which is reverse prenylated at C-2 by the reverse prenyltransferase phqJ. The other prenyltransferase present in the cluster, phqI may be a redundant gene in the pathway. During biosynthetic assembly, the key step to produce the polycyclic core is catalyzed by the bifunctional reductase and intramolecular [4+2] Diels-Alderase, phqE, resulting in formation of the [2.2.2] diazaoctane intermediate preparaherquamide. Following formation of preparaherquamide, an indole 2,3-epoxidation-initiated pinacol-like rearrangement is catalyzed by the phqK FAD-dependent monooxygenase. The prenyltransferase phqA, the cytochrome P450 monooxygenase phqL, and the FAD-linked oxidoreductase phqH (or the cytochrome P450 monooxygenase phqM), are proposed to be involved in the formation of the pyran ring. The FAD-dependent monooxygenase phqK is likely responsible for generation of the spiro-oxindole, and the N-methylation is likely mediated by the phqN methyltransferase leading to the isolable natural product paraherquamide F. However, the order of these biosynthetic steps has still to be determined. In late-stage paraherquamide biosynthesis, the third P450 monooxygenase, phqO, is probably responsible for the C-14 hydroxylation, transforming paraherquamide F to paraherquamide G, and paraherquamide E to the final product paraherquamide A. The expansion from the 6-membered ring pyran (in paraherquamides F and G) to the 7-membered dioxepin ring (in paraherquamides A and E) represents a poorly understood but intriguing process that probably involves the 2-oxoglutarate-dependent dioxygenase phqC. Finally, the remaining members of the paraherquamide cluster, including phqI as well as phqM (or phqH), do not have a clearly prescribed role and appear to be redundant. The protein is Methyltransferase phqN of Penicillium fellutanum.